The following is a 270-amino-acid chain: 3-methyl-2-oxobutanoate hydroxymethyltransferase (270 aa).

Mg(2+) contacts are provided by aspartate 50 and aspartate 89. Residues 50–51, aspartate 89, and lysine 118 each bind 3-methyl-2-oxobutanoate; that span reads DS. Mg(2+) is bound at residue glutamate 120. Residue glutamate 187 is the Proton acceptor of the active site.

This sequence belongs to the PanB family. As to quaternary structure, homodecamer; pentamer of dimers. Requires Mg(2+) as cofactor.

The protein localises to the cytoplasm. It catalyses the reaction 3-methyl-2-oxobutanoate + (6R)-5,10-methylene-5,6,7,8-tetrahydrofolate + H2O = 2-dehydropantoate + (6S)-5,6,7,8-tetrahydrofolate. The protein operates within cofactor biosynthesis; (R)-pantothenate biosynthesis; (R)-pantoate from 3-methyl-2-oxobutanoate: step 1/2. Functionally, catalyzes the reversible reaction in which hydroxymethyl group from 5,10-methylenetetrahydrofolate is transferred onto alpha-ketoisovalerate to form ketopantoate. This is 3-methyl-2-oxobutanoate hydroxymethyltransferase from Helicobacter pylori (strain HPAG1).